A 275-amino-acid polypeptide reads, in one-letter code: uncharacterized protein (275 aa).

Disordered regions lie at residues 1–25 and 185–275; these read MIGGERVLLGSQKREPSNEEDDQEQ and QRGE…RHHM. Basic and acidic residues predominate over residues 228 to 239; the sequence is KPGDGEENAKDD.

This is an uncharacterized protein from Neurospora crassa (strain ATCC 24698 / 74-OR23-1A / CBS 708.71 / DSM 1257 / FGSC 987).